The primary structure comprises 289 residues: 4-hydroxybenzoate octaprenyltransferase (289 aa).

A run of 9 helical transmembrane segments spans residues 19 to 39, 42 to 62, 85 to 105, 107 to 127, 134 to 154, 165 to 185, 211 to 231, 233 to 253, and 265 to 285; these read IPILLILWPTLTALVLASHGL, ISYLVIFTIGVVVMRTVGCII, GQLSIKNAIWLCISLTLVAFI, VLFLNLYTILLSFVALFLAIL, FFAIPQLILGLAFNFGIFMAF, AWIFYIATICWTIAYDTIYAL, ILLFNFLSLLLLIILGIYCDF, SFFYLGVVICSLFFVRNYFLY, and FSANHWIGLIIFIIAVIQYII.

This sequence belongs to the UbiA prenyltransferase family. It depends on Mg(2+) as a cofactor.

Its subcellular location is the cell inner membrane. The enzyme catalyses all-trans-octaprenyl diphosphate + 4-hydroxybenzoate = 4-hydroxy-3-(all-trans-octaprenyl)benzoate + diphosphate. It functions in the pathway cofactor biosynthesis; ubiquinone biosynthesis. In terms of biological role, catalyzes the prenylation of para-hydroxybenzoate (PHB) with an all-trans polyprenyl group. Mediates the second step in the final reaction sequence of ubiquinone-8 (UQ-8) biosynthesis, which is the condensation of the polyisoprenoid side chain with PHB, generating the first membrane-bound Q intermediate 3-octaprenyl-4-hydroxybenzoate. The polypeptide is 4-hydroxybenzoate octaprenyltransferase (Francisella tularensis subsp. holarctica (strain FTNF002-00 / FTA)).